A 207-amino-acid chain; its full sequence is LexA repressor (207 aa).

The H-T-H motif DNA-binding region spans 28 to 48 (VREIGEAVGLASSSTVHGHLA). Residues Ser129 and Lys167 each act as for autocatalytic cleavage activity in the active site.

It belongs to the peptidase S24 family. As to quaternary structure, homodimer.

The enzyme catalyses Hydrolysis of Ala-|-Gly bond in repressor LexA.. Represses a number of genes involved in the response to DNA damage (SOS response), including recA and lexA. In the presence of single-stranded DNA, RecA interacts with LexA causing an autocatalytic cleavage which disrupts the DNA-binding part of LexA, leading to derepression of the SOS regulon and eventually DNA repair. The sequence is that of LexA repressor from Bacillus licheniformis (strain ATCC 14580 / DSM 13 / JCM 2505 / CCUG 7422 / NBRC 12200 / NCIMB 9375 / NCTC 10341 / NRRL NRS-1264 / Gibson 46).